Reading from the N-terminus, the 292-residue chain is Bifunctional protein FolD (292 aa).

NADP(+)-binding positions include 166 to 168 (GRS), Ser191, and Ile232.

This sequence belongs to the tetrahydrofolate dehydrogenase/cyclohydrolase family. Homodimer.

It carries out the reaction (6R)-5,10-methylene-5,6,7,8-tetrahydrofolate + NADP(+) = (6R)-5,10-methenyltetrahydrofolate + NADPH. The enzyme catalyses (6R)-5,10-methenyltetrahydrofolate + H2O = (6R)-10-formyltetrahydrofolate + H(+). It functions in the pathway one-carbon metabolism; tetrahydrofolate interconversion. Catalyzes the oxidation of 5,10-methylenetetrahydrofolate to 5,10-methenyltetrahydrofolate and then the hydrolysis of 5,10-methenyltetrahydrofolate to 10-formyltetrahydrofolate. The protein is Bifunctional protein FolD of Wolbachia sp. subsp. Drosophila simulans (strain wRi).